The following is a 130-amino-acid chain: Large ribosomal subunit protein bL19 (130 aa).

It belongs to the bacterial ribosomal protein bL19 family.

Functionally, this protein is located at the 30S-50S ribosomal subunit interface and may play a role in the structure and function of the aminoacyl-tRNA binding site. The protein is Large ribosomal subunit protein bL19 of Cupriavidus metallidurans (strain ATCC 43123 / DSM 2839 / NBRC 102507 / CH34) (Ralstonia metallidurans).